The following is a 175-amino-acid chain: 3-hydroxyanthranilate 3,4-dioxygenase (175 aa).

Arg45 lines the O2 pocket. The Fe cation site is built by His49, Glu55, and His93. Residue Glu55 coordinates substrate. Arg97 and Glu107 together coordinate substrate. A divalent metal cation contacts are provided by Cys122, Cys125, Cys159, and Cys162.

Belongs to the 3-HAO family. Fe(2+) serves as cofactor.

Its subcellular location is the cytoplasm. The enzyme catalyses 3-hydroxyanthranilate + O2 = (2Z,4Z)-2-amino-3-carboxymuconate 6-semialdehyde. Its pathway is cofactor biosynthesis; NAD(+) biosynthesis; quinolinate from L-kynurenine: step 3/3. Catalyzes the oxidative ring opening of 3-hydroxyanthranilate to 2-amino-3-carboxymuconate semialdehyde, which spontaneously cyclizes to quinolinate. The protein is 3-hydroxyanthranilate 3,4-dioxygenase of Lodderomyces elongisporus (strain ATCC 11503 / CBS 2605 / JCM 1781 / NBRC 1676 / NRRL YB-4239) (Yeast).